The following is a 216-amino-acid chain: Putative holocytochrome-c1 synthase (216 aa).

A disordered region spans residues 1–46; that stretch reads MQPEQLNQEEESKCPVPPEVRDAWLKSHGGKKPSEVHDTPHPTMLP.

This sequence belongs to the cytochrome c-type heme lyase family.

The protein localises to the mitochondrion inner membrane. It carries out the reaction holo-[cytochrome c] = apo-[cytochrome c] + heme b. Its function is as follows. Lyase that catalyzes the covalent linking of the heme group to the cytochrome C1 apoprotein to produce the mature functional cytochrome. The polypeptide is Putative holocytochrome-c1 synthase (Schizosaccharomyces pombe (strain 972 / ATCC 24843) (Fission yeast)).